The chain runs to 189 residues: Peptidyl-tRNA hydrolase (189 aa).

Residue His-19 is the Proton acceptor of the active site. Residues Tyr-64, Asn-66, and Asn-112 each coordinate tRNA.

It belongs to the PTH family. Monomer.

It is found in the cytoplasm. The enzyme catalyses an N-acyl-L-alpha-aminoacyl-tRNA + H2O = an N-acyl-L-amino acid + a tRNA + H(+). Functionally, hydrolyzes ribosome-free peptidyl-tRNAs (with 1 or more amino acids incorporated), which drop off the ribosome during protein synthesis, or as a result of ribosome stalling. Catalyzes the release of premature peptidyl moieties from peptidyl-tRNA molecules trapped in stalled 50S ribosomal subunits, and thus maintains levels of free tRNAs and 50S ribosomes. The sequence is that of Peptidyl-tRNA hydrolase from Gluconobacter oxydans (strain 621H) (Gluconobacter suboxydans).